A 471-amino-acid chain; its full sequence is UDP-N-acetylmuramoylalanine--D-glutamate ligase (471 aa).

120–126 (GSNGKTT) is a binding site for ATP.

It belongs to the MurCDEF family.

The protein localises to the cytoplasm. The catalysed reaction is UDP-N-acetyl-alpha-D-muramoyl-L-alanine + D-glutamate + ATP = UDP-N-acetyl-alpha-D-muramoyl-L-alanyl-D-glutamate + ADP + phosphate + H(+). Its pathway is cell wall biogenesis; peptidoglycan biosynthesis. Functionally, cell wall formation. Catalyzes the addition of glutamate to the nucleotide precursor UDP-N-acetylmuramoyl-L-alanine (UMA). The protein is UDP-N-acetylmuramoylalanine--D-glutamate ligase of Nitrosomonas europaea (strain ATCC 19718 / CIP 103999 / KCTC 2705 / NBRC 14298).